Here is a 751-residue protein sequence, read N- to C-terminus: Protein CLMP1 (751 aa).

Residues 1–11 are compositionally biased toward basic residues; the sequence is MGKSGGRKKKS. Positions 1 to 33 are disordered; sequence MGKSGGRKKKSGGSNSNSSQVNSSETSGLSKPS. Residues 12-28 are compositionally biased toward low complexity; it reads GGSNSNSSQVNSSETSG. TPR repeat units follow at residues 51–84, 89–124, and 125–158; these read AHEL…IPKS, AVFH…QPGF, and TRAL…DPNH. A PB1 domain is found at 290–382; sequence WRPLKFVYDH…GMLRLHVVDV (93 aa). Positions 386–443 are disordered; sequence QEPMLLEEEEEEVEEKPVIEEVISSPTESLSETEINTEKTDKEVEKEKASSSEDPETK. A compositionally biased stretch (acidic residues) spans 390-399; the sequence is LLEEEEEEVE. Over residues 409-419 the composition is skewed to polar residues; sequence SSPTESLSETE. Residues 421-443 are compositionally biased toward basic and acidic residues; sequence NTEKTDKEVEKEKASSSEDPETK. TPR repeat units lie at residues 434–468, 481–514, and 536–570; these read ASSS…DPDA, SEAL…AFFN, and EVVA…KPDF. The span at 630–648 shows a compositional bias: basic and acidic residues; sequence EQRMDDLKNPNSNKKEEVS. The disordered stretch occupies residues 630–663; the sequence is EQRMDDLKNPNSNKKEEVSKRRKKQGGDGNEEVS.

Interacts with myosin XI-K. In terms of tissue distribution, expressed in roots, stems, leaves, apex, flowers and seeds. Detected throughout the petiole in juvenile and young leaves, but restricted to the petiole midvein in older leaves. Expressed in hydathodes, at the base of the trichome, in the vascular cylinder of primary root and lateral root, in emerging lateral root primordia, in pollen and in developing embryos, but not in mature embryos.

Its subcellular location is the cytoplasm. In terms of biological role, required for plastid separation and partitioning during cell division. Not involved in plastid constriction or in the organization of cytoplasmic actin cables. Contributes to polar growth of root hairs. This chain is Protein CLMP1, found in Arabidopsis thaliana (Mouse-ear cress).